The following is a 359-amino-acid chain: Archaemetzincin-2 (359 aa).

Histidine 254 contacts Zn(2+). Residue glutamate 255 is the Proton acceptor of the active site. 6 residues coordinate Zn(2+): histidine 258, histidine 264, cysteine 265, cysteine 270, cysteine 289, and cysteine 292.

The protein belongs to the peptidase M54 family. The cofactor is Zn(2+). In terms of tissue distribution, predominantly expressed in testis.

In terms of biological role, probable zinc metalloprotease. This Mus musculus (Mouse) protein is Archaemetzincin-2 (Amz2).